The chain runs to 1136 residues: MPEAKPAAKKASKGKDAPKEAPAKQTPEEPPKEAPPEDQSPTAEEPTGIFLKKPDSVSVETGKDAVILAKVNGKELPGKPTIKWFKGKWQELGSKSGARFIFKESHDSTSNVYTVELHIGKVVLGDRGDYRLEIKAKDVCDSCSFNVDVEAPRQDSSGQSLESFKRSGDGKSEDAGELDFSGLLKKREVVEEEKKKKKDDDDLGIPPEIWELLKGAKKSEYEKIAFQYGITDLRGMLKRLKKAKVEVKKSAAFTKKLDPAYQVDRGNKIKLVVEISDPDLPLKWFKNGQEIKPSSKYVFENVGKKRILTINKCTLADDAAYEVAVQDEKCFTELFVKEPPVLIVTPLEDQQVFVGDRVEMSVEVSEEGAQVMWMKDGVEMTREDSYKARYRFKKDGKRHILIYSDVAQEDGGRYQVITNGGQCEAELIVEEKQLEVLQDIADLTVKAAEQAVFKCEVSDEKVTGKWYKNGVEVRPSKRITISHVGRFHKLVIDDVRPEDEGDYTFVPDGYALSLSAKLNFLEIKVEYVPKQEPPKIHLDCSGKTSDNSIVVVAGNKLRLDVAITGEPPPTATWLRGDEVFTATEGRTHIEQRPDCSSFVIESAERSDEGRYTIKVTNPVGEDVASIFLRVVDVPDPPEAVRVTSVGEDWAILVWEPPKYDGGQPVTGYLMERKKKGSQRWMKINFEVFTDTTYESTKMIEGVLYEMRVFAVNAIGVSQPSMNTKPFMPIAPTSAPQHLTVEDVTDTTTTLKWRPPDRIGAGGIDGYLVEYCLEGSEEWVPANKEPVERCGFTVKDLPTGARILFRVVGVNIAGRSEPATLLQPVTIREIVEQPKIRLPRHLRQTYIRKVGEALNLVIPFQGKPRPQVVWTKGGAPLDTSRVNVRTSDFDTVFFVRQAARSDSGEYELSVQIENMKDTATIRIRVVEKAGPAENVMVKEVWGTNALVEWQPPKDDGNSEITGYFVQKADKKTMEWFNVYEHNRHTSCTVSDLIVGNEYYFRIFSENICGLSDSPGVSKNTARILKTGITLKPLEYKEHDFRTAPKFLTPLMDRVVVAGYTAALNCAVRGHPKPKVVWMKNKMEIHEDPKFLITNYQGILTLNIRRPSPFDAGTYSCRAFNELGEALAECKLDVRVPQ.

Disordered regions lie at residues 1–55 and 151–177; these read MPEA…KKPD and APRQ…DAGE. Residues 13 to 35 show a composition bias toward basic and acidic residues; it reads KGKDAPKEAPAKQTPEEPPKEAP. One can recognise an Ig-like C2-type 1 domain in the interval 46 to 149; that stretch reads PTGIFLKKPD…CDSCSFNVDV (104 aa). Residues 163–174 are compositionally biased toward basic and acidic residues; it reads SFKRSGDGKSED. Ig-like C2-type domains follow at residues 250–339, 340–432, 433–533, and 534–633; these read SAAF…VKEP, PVLI…VEEK, QLEV…KQEP, and PKIH…VVDV. 2 consecutive Fibronectin type-III domains span residues 636–732 and 734–829; these read PPEA…IAPT and APQH…IREI. The Ig-like C2-type 6 domain maps to 833–927; it reads PKIRLPRHLR…ATIRIRVVEK (95 aa). One can recognise a Fibronectin type-III 3 domain in the interval 930–1025; it reads PAENVMVKEV…SKNTARILKT (96 aa). One can recognise an Ig-like C2-type 7 domain in the interval 1043–1136; it reads PKFLTPLMDR…ECKLDVRVPQ (94 aa).

This sequence belongs to the immunoglobulin superfamily. MyBP family.

In terms of biological role, thick filament-associated protein located in the crossbridge region of vertebrate striated muscle a bands. In vitro it binds MHC, F-actin and native thin filaments, and modifies the activity of actin-activated myosin ATPase. It may modulate muscle contraction or may play a more structural role. The polypeptide is Myosin-binding protein C, fast-type (Mybpc2) (Mus musculus (Mouse)).